We begin with the raw amino-acid sequence, 266 residues long: Undecaprenyl-diphosphatase (266 aa).

Transmembrane regions (helical) follow at residues 38–58 (SDMF…IIYW), 80–100 (LIVA…VLHF), 108–128 (PIAW…WAAA), 136–156 (ITWL…IFPG), 176–196 (AAAT…ASGY), 217–237 (IAFV…LAYI), and 245–265 (FAVY…TGLI).

This sequence belongs to the UppP family.

The protein localises to the cell inner membrane. The enzyme catalyses di-trans,octa-cis-undecaprenyl diphosphate + H2O = di-trans,octa-cis-undecaprenyl phosphate + phosphate + H(+). Its function is as follows. Catalyzes the dephosphorylation of undecaprenyl diphosphate (UPP). Confers resistance to bacitracin. This chain is Undecaprenyl-diphosphatase, found in Rhizobium leguminosarum bv. trifolii (strain WSM2304).